The following is a 185-amino-acid chain: Large ribosomal subunit protein uL6 (185 aa).

This sequence belongs to the universal ribosomal protein uL6 family. As to quaternary structure, part of the 50S ribosomal subunit.

In terms of biological role, this protein binds to the 23S rRNA, and is important in its secondary structure. It is located near the subunit interface in the base of the L7/L12 stalk, and near the tRNA binding site of the peptidyltransferase center. This is Large ribosomal subunit protein uL6 from Staphylothermus marinus (strain ATCC 43588 / DSM 3639 / JCM 9404 / F1).